The following is a 485-amino-acid chain: Probable carboxypeptidase S-like 1 (485 aa).

Positions 1 to 21 are cleaved as a signal peptide; it reads MIFKFFFIFFLIILVIKISES. His111 serves as a coordination point for Zn(2+). Asp113 is a catalytic residue. A Zn(2+)-binding site is contributed by Asp142. Glu177 serves as the catalytic Proton acceptor. Zn(2+)-binding residues include Glu178, Asp204, and His431.

It belongs to the peptidase M20A family. Zn(2+) is required as a cofactor.

It localises to the secreted. The chain is Probable carboxypeptidase S-like 1 from Dictyostelium discoideum (Social amoeba).